The primary structure comprises 943 residues: Isoleucine--tRNA ligase (943 aa).

The 'HIGH' region motif lies at 58–68 (PYANGSIHIGH). Position 567 (E567) interacts with L-isoleucyl-5'-AMP. The 'KMSKS' region motif lies at 608–612 (KMSKS). Position 611 (K611) interacts with ATP. Zn(2+) contacts are provided by C906, C909, C926, and C929.

This sequence belongs to the class-I aminoacyl-tRNA synthetase family. IleS type 1 subfamily. As to quaternary structure, monomer. Zn(2+) is required as a cofactor.

The protein localises to the cytoplasm. The catalysed reaction is tRNA(Ile) + L-isoleucine + ATP = L-isoleucyl-tRNA(Ile) + AMP + diphosphate. Functionally, catalyzes the attachment of isoleucine to tRNA(Ile). As IleRS can inadvertently accommodate and process structurally similar amino acids such as valine, to avoid such errors it has two additional distinct tRNA(Ile)-dependent editing activities. One activity is designated as 'pretransfer' editing and involves the hydrolysis of activated Val-AMP. The other activity is designated 'posttransfer' editing and involves deacylation of mischarged Val-tRNA(Ile). In Pseudomonas aeruginosa (strain LESB58), this protein is Isoleucine--tRNA ligase.